A 99-amino-acid chain; its full sequence is Plastocyanin (99 aa).

In terms of domain architecture, Plastocyanin-like spans 1–99 (IEIKLGGDDG…AGMVGKVTVQ (99 aa)). Positions 37, 84, 87, and 92 each coordinate Cu cation.

This sequence belongs to the plastocyanin family. Cu(2+) is required as a cofactor.

Its subcellular location is the plastid. It localises to the chloroplast thylakoid membrane. Functionally, participates in electron transfer between P700 and the cytochrome b6-f complex in photosystem I. In Rumex obtusifolius (Bitter dock), this protein is Plastocyanin (PETE).